The chain runs to 306 residues: Choline-binding protein (306 aa).

Residues 1–22 (MKRKYLKLMIGLALAATLTLSG) form the signal peptide. Residue cysteine 23 is the site of N-palmitoyl cysteine attachment. A lipid anchor (S-diacylglycerol cysteine) is attached at cysteine 23.

This sequence belongs to the OsmX family.

The protein resides in the cell membrane. Member of a high affinity multicomponent binding-protein-dependent transport system for choline. In Bacillus subtilis (strain 168), this protein is Choline-binding protein (opuBC).